Reading from the N-terminus, the 897-residue chain is Translation initiation factor IF-2 (897 aa).

Disordered regions lie at residues 69-88 and 95-304; these read RKTKSTISVQGTGGKNKEVQ and RTYV…NAMK. Residues 101 to 161 are compositionally biased toward basic and acidic residues; sequence SALEDEQRQA…EEKARIEAQQ (61 aa). Low complexity predominate over residues 162–179; that stretch reads KARQAQQPAKAAGSTAQQ. Basic and acidic residues-rich tracts occupy residues 180 to 196, 203 to 217, 226 to 239, and 277 to 286; these read EAEKMAKREAEELKRQQ, KAEELAAKKAEEARV, WAEEEAARAKESSD, and RREDDRDARN. Residues 287-296 are compositionally biased toward basic residues; it reads PRARKGKRGK. One can recognise a tr-type G domain in the interval 397-566; sequence PRAPVVTIMG…LIQSEVLELK (170 aa). Residues 406-413 are G1; that stretch reads GHVDHGKT. 406-413 contributes to the GTP binding site; that stretch reads GHVDHGKT. The interval 431–435 is G2; it reads GITQH. Residues 452 to 455 form a G3 region; it reads DTPG. GTP is bound by residues 452–456 and 506–509; these read DTPGH and NKID. Positions 506 to 509 are G4; it reads NKID. The G5 stretch occupies residues 542–544; sequence SAK.

It belongs to the TRAFAC class translation factor GTPase superfamily. Classic translation factor GTPase family. IF-2 subfamily.

The protein localises to the cytoplasm. One of the essential components for the initiation of protein synthesis. Protects formylmethionyl-tRNA from spontaneous hydrolysis and promotes its binding to the 30S ribosomal subunits. Also involved in the hydrolysis of GTP during the formation of the 70S ribosomal complex. This Aeromonas hydrophila subsp. hydrophila (strain ATCC 7966 / DSM 30187 / BCRC 13018 / CCUG 14551 / JCM 1027 / KCTC 2358 / NCIMB 9240 / NCTC 8049) protein is Translation initiation factor IF-2.